Here is a 646-residue protein sequence, read N- to C-terminus: NADP-dependent malic enzyme 4, chloroplastic (646 aa).

A chloroplast-targeting transit peptide spans 1-74 (MISLTPSLFL…LETSAADIVP (74 aa)). Tyr-194 functions as the Proton donor in the catalytic mechanism. Arg-247 contacts NADP(+). Lys-265 acts as the Proton acceptor in catalysis. Glu-337, Asp-338, and Asp-361 together coordinate a divalent metal cation. NADP(+) contacts are provided by residues Asp-361, 390-406 (LFLG…ELIA), and Asn-502.

Belongs to the malic enzymes family. In terms of assembly, homodimer and homotetramer. It depends on Mg(2+) as a cofactor. Requires Mn(2+) as cofactor. In terms of tissue distribution, expressed in leaves, stems, flowers and roots, mainly in vascular system. In roots, present in the stele, including the vascular tissue and the pericycle, mainly at emerging lateral roots and at root tips.

It is found in the plastid. The protein localises to the chloroplast. The catalysed reaction is (S)-malate + NADP(+) = pyruvate + CO2 + NADPH. It catalyses the reaction oxaloacetate + H(+) = pyruvate + CO2. It participates in photosynthesis; C3 acid pathway. Its function is as follows. The chloroplastic ME isoform decarboxylates malate shuttled from neighboring mesophyll cells. The CO(2) released is then refixed by ribulose-bisphosphate carboxylase. This pathway eliminates the photorespiratory loss of CO(2) that occurs in most plants. The sequence is that of NADP-dependent malic enzyme 4, chloroplastic (NADP-ME4) from Arabidopsis thaliana (Mouse-ear cress).